A 217-amino-acid chain; its full sequence is 8-oxoguanine DNA glycosylase/AP lyase (217 aa).

Residues Lys-138 and Asp-157 contribute to the active site.

This sequence belongs to the type-2 OGG1 family.

It catalyses the reaction 2'-deoxyribonucleotide-(2'-deoxyribose 5'-phosphate)-2'-deoxyribonucleotide-DNA = a 3'-end 2'-deoxyribonucleotide-(2,3-dehydro-2,3-deoxyribose 5'-phosphate)-DNA + a 5'-end 5'-phospho-2'-deoxyribonucleoside-DNA + H(+). Its function is as follows. Catalyzes the excision of an oxidatively damaged form of guanine (7,8-dihydro-8-oxoguanine = 8-oxoG) from DNA. Also cleaves the DNA backbone at apurinic/apyrimidinic sites (AP sites). In Fusobacterium nucleatum subsp. nucleatum (strain ATCC 25586 / DSM 15643 / BCRC 10681 / CIP 101130 / JCM 8532 / KCTC 2640 / LMG 13131 / VPI 4355), this protein is 8-oxoguanine DNA glycosylase/AP lyase.